A 167-amino-acid chain; its full sequence is MATLDVLRFPDERLRKIATPIEKITSDLEHIIEDMFETMYLEEGIGLAATQVNIHKRLVVVDTSENRDQPMVFINPELIEKRGETGIEEGCLSVPECRAFVPRAEWIKVRALDRHGEPFEIEADGLLAICLQHEMDHLVGKLFVDYLSPLKRQRIRQKLEKLARNER.

Fe cation contacts are provided by cysteine 91 and histidine 133. Glutamate 134 is an active-site residue. Residue histidine 137 coordinates Fe cation.

The protein belongs to the polypeptide deformylase family. Fe(2+) is required as a cofactor.

It catalyses the reaction N-terminal N-formyl-L-methionyl-[peptide] + H2O = N-terminal L-methionyl-[peptide] + formate. In terms of biological role, removes the formyl group from the N-terminal Met of newly synthesized proteins. Requires at least a dipeptide for an efficient rate of reaction. N-terminal L-methionine is a prerequisite for activity but the enzyme has broad specificity at other positions. This is Peptide deformylase from Tolumonas auensis (strain DSM 9187 / NBRC 110442 / TA 4).